We begin with the raw amino-acid sequence, 504 residues long: Cytochrome P450 4A2 (504 aa).

A propeptide spanning residues 1–4 (MGFS) is cleaved from the precursor. Glutamate 315 lines the heme pocket. The residue at position 434 (serine 434) is a Phosphoserine. Cysteine 451 contributes to the heme binding site.

It belongs to the cytochrome P450 family. Heme is required as a cofactor.

It is found in the endoplasmic reticulum membrane. The protein resides in the microsome membrane. The enzyme catalyses an omega-methyl-long-chain fatty acid + reduced [NADPH--hemoprotein reductase] + O2 = an omega-hydroxy-long-chain fatty acid + oxidized [NADPH--hemoprotein reductase] + H2O + H(+). It carries out the reaction dodecanoate + reduced [NADPH--hemoprotein reductase] + O2 = (11R)-hydroxydodecanoate + oxidized [NADPH--hemoprotein reductase] + H2O + H(+). The catalysed reaction is dodecanoate + reduced [NADPH--hemoprotein reductase] + O2 = 12-hydroxydodecanoate + oxidized [NADPH--hemoprotein reductase] + H2O + H(+). It catalyses the reaction tetradecanoate + reduced [NADPH--hemoprotein reductase] + O2 = 14-hydroxytetradecanoate + oxidized [NADPH--hemoprotein reductase] + H2O + H(+). The enzyme catalyses hexadecanoate + reduced [NADPH--hemoprotein reductase] + O2 = 16-hydroxyhexadecanoate + oxidized [NADPH--hemoprotein reductase] + H2O + H(+). The protein operates within lipid metabolism; fatty acid metabolism. A cytochrome P450 monooxygenase that catalyzes omega and omega-1 hydroxylation of saturated fatty acids. Exhibits preferential omega versus omega-1 regioselectivity and (R) versus (S) stereoselectivity for hydroxylation of lauric and myristic acids. Has low activity toward palmitic acid. Mechanistically, uses molecular oxygen inserting one oxygen atom into a substrate, and reducing the second into a water molecule, with two electrons provided by NADPH via cytochrome P450 reductase (CPR; NADPH-ferrihemoprotein reductase). The polypeptide is Cytochrome P450 4A2 (Rattus norvegicus (Rat)).